Consider the following 489-residue polypeptide: Major aspartyl peptidase 1 (489 aa).

Residues M1–A16 form the signal peptide. Residues Y101 to A432 form the Peptidase A1 domain. D119 is a catalytic residue. Position 121 (G121) interacts with pepstatin A. C132 and C137 are oxidised to a cystine. Residues T161, G163, and S164 each contribute to the pepstatin A site. N266 is a glycosylation site (N-linked (GlcNAc...) asparagine). Y286 lines the pepstatin A pocket. Residue D317 is part of the active site. The pepstatin A site is built by T320 and T321. An intrachain disulfide couples C357 to C391. The segment at A442–A466 is disordered. Gly residues predominate over residues T450 to S463. A propeptide spans G456 to I489 (removed at pH 5.0; by autocatalysis).

This sequence belongs to the peptidase A1 family. Monomer. In terms of processing, activated by the autocatalytic cleavage of the propeptide. Cleaved at the end of the propeptide promiscuously from residue 76 to residue 79. C-terminal cleavage by autocatalysis at Gly-456 at the pH optimum indicating a possible regulatory or other function of this propeptide.

Its subcellular location is the secreted. Activated by low pH. Inhibited by pepstatin A with an IC(50) of 1.4 nM. Inhibited by acetyl pepstatin. Inhibited by HIV antiretroviral therapy protease inhibitors including amprenavir and ritonavir. Inhibited by HIV-1 protease inhibitor brecanavir with an approximate IC(50) of 352 nM. Inhibited by HIV-1 protease inhibitors CGP53437 and GS-8374. From the tested peptidomimetic inhibitor molecules, macrocycles containing P2-P3' tethered side chains, statines in P1 and an alpha amino acid in P2' are the best. From the linear peptidomimetic inhibitors, the ones with a phenylstatine or hydroxyethylamine scissile bond isoster are better than compounds with a reduced bond or a homo-amide. Overall, inhibitors with a phenylalanine side chain, either unsubstituted or with a small substituent, is preferred in P1 while a bulkier P1 side chain leads to lower inhibition. In terms of biological role, possesses prevalent extracellular endopeptidase activity at low pH condition. Required for high-density growth in acidic environments. Broad substrate specificity with preference cleavage of the peptide substrate between hydrophobic amino acids. Cleaves substrate at P1-P1' between Phe-Leu. Positively charged amino acids are preferred at P2. Prefers hydrophobic amino acids at the P3 and P4 positions. Cleaves substrate also at P1'-P2' between Leu-Val to some degree. Required for virulence in mouse inhalation model of infection. This chain is Major aspartyl peptidase 1, found in Cryptococcus neoformans var. grubii serotype A (strain H99 / ATCC 208821 / CBS 10515 / FGSC 9487) (Filobasidiella neoformans var. grubii).